Consider the following 79-residue polypeptide: uncharacterized protein (79 aa).

A SpoVT-AbrB domain is found at 10–60 (EAVLTMDSKGQILLPKELRERAGLKAGDRLVAIAGCDENEEVCCLILVKAE).

This is an uncharacterized protein from Archaeoglobus fulgidus (strain ATCC 49558 / DSM 4304 / JCM 9628 / NBRC 100126 / VC-16).